The primary structure comprises 311 residues: Dof zinc finger protein DOF1.4 (311 aa).

Residues 1–12 (MQSKNMIVASSH) are compositionally biased toward polar residues. Residues 1–29 (MQSKNMIVASSHQQQQQQQPQQPQPQLKC) form a disordered region. Residues 13 to 26 (QQQQQQQPQQPQPQ) are compositionally biased toward low complexity. A Dof-type zinc finger spans residues 27–81 (LKCPRCDSSNTKFCYYNNYSLSQPRHFCKACKRYWTRGGTLRNVPVGGSYRKNKR). 4 residues coordinate Zn(2+): Cys-29, Cys-32, Cys-54, and Cys-57. A disordered region spans residues 72–110 (VGGSYRKNKRVKRPSTATTTTASTVSTTNSSSPNNPHQI). A compositionally biased stretch (low complexity) spans 85 to 107 (PSTATTTTASTVSTTNSSSPNNP).

It localises to the nucleus. In terms of biological role, transcription factor that binds specifically to a 5'-AA[AG]G-3' consensus core sequence. This is Dof zinc finger protein DOF1.4 (DOF1.4) from Arabidopsis thaliana (Mouse-ear cress).